Here is a 410-residue protein sequence, read N- to C-terminus: Voltage-dependent chloride channel 2, chloroplastic (410 aa).

At 1–110 the chain is on the lumenal, thylakoid side; it reads MYQSMNLSFS…RHVSSSPSSR (110 aa). Residues 111–131 traverse the membrane as a helical segment; it reads VILSLIPPVFFFTTVAILIAG. The Stromal portion of the chain corresponds to 132 to 147; sequence YNSAVDLDWLPDFFPV. The chain crosses the membrane as a helical span at residues 148–168; sequence LRASPLPYQLTAPALALLLVF. Residues 169-315 lie on the Lumenal, thylakoid side of the membrane; sequence RTEASYSRFE…PLSYTRLTSR (147 aa). 2 helical membrane-spanning segments follow: residues 316-336 and 337-357; these read FLVLWHLTLPVILWDDCHWNV and VPATFISAASLFCIEEVGVLI. The Lumenal, thylakoid segment spans residues 358–410; that stretch reads EEPFSMLALDELCAMVLSNSDEAVESKEVIRNRIIAKKRILEIKHSSNGWHKS.

The protein belongs to the anion channel-forming bestrophin (TC 1.A.46) family. Voltage-dependent chloride channel subfamily. In terms of tissue distribution, mostly expressed in flowers and, to a lower extent, in leaves, stems and roots.

Its subcellular location is the plastid. It localises to the chloroplast thylakoid membrane. The catalysed reaction is chloride(in) = chloride(out). In terms of biological role, voltage-dependent chloride (Cl) channel probably contributing to proton motive force (PMF) partitioning across the thylakoid membrane by anion influx into the lumen. Influences thylakoid ultrastructure, including lumen size and organization. The polypeptide is Voltage-dependent chloride channel 2, chloroplastic (Arabidopsis thaliana (Mouse-ear cress)).